Reading from the N-terminus, the 470-residue chain is Cell division protein FtsP (470 aa).

The tat-type signal signal peptide spans 1–29; it reads MKNCSRRQLLKTTLFSTALFSVPAPLLAA.

It belongs to the FtsP family. In terms of processing, predicted to be exported by the Tat system. The position of the signal peptide cleavage has not been experimentally proven.

Its subcellular location is the periplasm. Functionally, cell division protein that is required for growth during stress conditions. May be involved in protecting or stabilizing the divisomal assembly under conditions of stress. The polypeptide is Cell division protein FtsP (Aggregatibacter aphrophilus (strain NJ8700) (Haemophilus aphrophilus)).